A 291-amino-acid chain; its full sequence is Nucleotide-binding protein RALTA_A0325 (291 aa).

Residue 8–15 coordinates ATP; the sequence is GISGSGKS. 57–60 provides a ligand contact to GTP; sequence DIRS.

This sequence belongs to the RapZ-like family.

Displays ATPase and GTPase activities. The chain is Nucleotide-binding protein RALTA_A0325 from Cupriavidus taiwanensis (strain DSM 17343 / BCRC 17206 / CCUG 44338 / CIP 107171 / LMG 19424 / R1) (Ralstonia taiwanensis (strain LMG 19424)).